The following is a 688-amino-acid chain: Lipase (688 aa).

A signal peptide spans 1 to 35; sequence MKTRQNKYSIRKFSVGASSILIAALLFMGGGSAQA. The tract at residues 31 to 309 is disordered; that stretch reads GSAQAAEQQQ…KSAKQKQYKN (279 aa). Residues 36 to 302 constitute a propeptide, removed in mature form; it reads AEQQQDKGTV…KNEDQTNKSA (267 aa). A compositionally biased stretch (polar residues) spans 45–54; that stretch reads VENSTTQSIG. Over residues 68–79 the composition is skewed to low complexity; that stretch reads NKNVNEKSNVNS. Composition is skewed to basic and acidic residues over residues 84 to 95, 103 to 117, and 126 to 143; these read ESLHNETPKNED, SQND…EQNK, and HSEE…KHAS. Residues 144 to 172 show a composition bias toward polar residues; sequence ENNQTLHSKAAQSNEDVKTKPSQLDNTAA. The span at 173 to 183 shows a compositional bias: basic and acidic residues; sequence KQEDSQKENLS. The span at 184–211 shows a compositional bias: polar residues; it reads KQDTQSSKTTDLLRATAQNQSKDSQSTE. Residues 240-267 are compositionally biased toward basic and acidic residues; that stretch reads SKEEPLKVDKQANPTTDKDKSSKNDKGS. The span at 274–289 shows a compositional bias: polar residues; sequence LESNAVATTNKQSKQQ. The active-site Nucleophile is the Ser418. Catalysis depends on Asp609, which acts as the Charge relay system. Residue Asp647 participates in Ca(2+) binding. His648 acts as the Charge relay system in catalysis. Residues Asp650, Asp655, and Asp658 each contribute to the Ca(2+) site.

This sequence belongs to the AB hydrolase superfamily. Lipase family.

The protein localises to the secreted. It catalyses the reaction a triacylglycerol + H2O = a diacylglycerol + a fatty acid + H(+). The chain is Lipase (lip) from Staphylococcus epidermidis.